The following is a 454-amino-acid chain: Phosphoglucosamine mutase (454 aa).

The Phosphoserine intermediate role is filled by serine 102. Positions 102, 247, 249, and 251 each coordinate Mg(2+). Serine 102 carries the phosphoserine modification.

It belongs to the phosphohexose mutase family. Mg(2+) serves as cofactor. Activated by phosphorylation.

It catalyses the reaction alpha-D-glucosamine 1-phosphate = D-glucosamine 6-phosphate. Functionally, catalyzes the conversion of glucosamine-6-phosphate to glucosamine-1-phosphate. This chain is Phosphoglucosamine mutase, found in Kineococcus radiotolerans (strain ATCC BAA-149 / DSM 14245 / SRS30216).